We begin with the raw amino-acid sequence, 160 residues long: Eukaryotic translation initiation factor 5A-3 (160 aa).

Basic and acidic residues predominate over residues 1 to 12 (MSDEEHHFESKA). The segment at 1–21 (MSDEEHHFESKADAGASKTYP) is disordered. Position 52 is a hypusine (K52).

It belongs to the eIF-5A family. Lys-52 undergoes hypusination, a unique post-translational modification that consists in the addition of a butylamino group from spermidine to lysine side chain, leading to the formation of the unusual amino acid hypusine. eIF-5As are the only known proteins to undergo this modification, which is essential for their function.

Functionally, translation factor that promotes translation elongation and termination, particularly upon ribosome stalling at specific amino acid sequence contexts. Binds between the exit (E) and peptidyl (P) site of the ribosome and promotes rescue of stalled ribosome: specifically required for efficient translation of polyproline-containing peptides as well as other motifs that stall the ribosome. Acts as a ribosome quality control (RQC) cofactor by joining the RQC complex to facilitate peptidyl transfer during CAT tailing step. This chain is Eukaryotic translation initiation factor 5A-3 (EIF5A3), found in Solanum tuberosum (Potato).